The chain runs to 471 residues: Putative multidrug resistance protein MdtD (471 aa).

The Periplasmic portion of the chain corresponds to M1–Q11. A helical membrane pass occupies residues L12–A32. Topologically, residues L33–H48 are cytoplasmic. Residues M49–A69 traverse the membrane as a helical segment. The Periplasmic portion of the chain corresponds to D70–N76. Residues I77–T97 form a helical membrane-spanning segment. Topologically, residues L98 to L101 are cytoplasmic. A helical transmembrane segment spans residues L102 to M124. Over K125–T137 the chain is Periplasmic. The chain crosses the membrane as a helical span at residues F138–V158. Residues E159–H164 are Cytoplasmic-facing. The chain crosses the membrane as a helical span at residues W165–M185. The Periplasmic portion of the chain corresponds to P186–D196. A helical membrane pass occupies residues L197–S217. At K218 to P224 the chain is on the cytoplasmic side. The helical transmembrane segment at L225–A245 threads the bilayer. Residues R246–T262 are Periplasmic-facing. Residues F263–M283 traverse the membrane as a helical segment. Over T284–P285 the chain is Cytoplasmic. The helical transmembrane segment at V286 to M306 threads the bilayer. Topologically, residues V307 to T341 are periplasmic. Residues L342–L362 traverse the membrane as a helical segment. Residues Q363 to S395 lie on the Cytoplasmic side of the membrane. The helical transmembrane segment at M396–F416 threads the bilayer. Residues G417–T430 lie on the Periplasmic side of the membrane. A helical membrane pass occupies residues V431–A451. Over R452 to Q471 the chain is Cytoplasmic.

This sequence belongs to the major facilitator superfamily. TCR/Tet family.

The protein localises to the cell inner membrane. In Shigella boydii serotype 4 (strain Sb227), this protein is Putative multidrug resistance protein MdtD.